The chain runs to 494 residues: Glycosyl hydrolase family 109 protein (494 aa).

The interval 1–32 is disordered; that stretch reads MNDDARPAPEPQDIPPHSGAADEVNRQDPSRR. The segment at residues 1-58 is a signal peptide (tat-type signal); sequence MNDDARPAPEPQDIPPHSGAADEVNRQDPSRRSVLWTTAGVAGAGLGLGALGAGTASA. NAD(+)-binding positions include 104-105, Asp-126, 175-178, 195-196, and Asn-224; these read NR, WELH, and EC. Residues Tyr-253, Arg-272, 284 to 287, and Tyr-366 each bind substrate; that span reads YPNH. Tyr-284 serves as a coordination point for NAD(+).

Belongs to the Gfo/Idh/MocA family. Glycosyl hydrolase 109 subfamily. The cofactor is NAD(+). Predicted to be exported by the Tat system. The position of the signal peptide cleavage has not been experimentally proven.

In terms of biological role, glycosidase. This is Glycosyl hydrolase family 109 protein from Streptomyces filamentosus (Streptomyces roseosporus).